The primary structure comprises 272 residues: Phosphatidylglycerol--prolipoprotein diacylglyceryl transferase (272 aa).

Helical transmembrane passes span 17 to 37 (LQVH…WGLA), 55 to 75 (LVFY…VLFY), 90 to 110 (VWTG…AMLF), 125 to 145 (FIAP…FIGG), 174 to 194 (PSQI…LWWF), 202 to 222 (MAVS…MEFF), and 230 to 250 (GFIL…MLLI). Arg-138 is a binding site for a 1,2-diacyl-sn-glycero-3-phospho-(1'-sn-glycerol).

The protein belongs to the Lgt family.

It is found in the cell inner membrane. It carries out the reaction L-cysteinyl-[prolipoprotein] + a 1,2-diacyl-sn-glycero-3-phospho-(1'-sn-glycerol) = an S-1,2-diacyl-sn-glyceryl-L-cysteinyl-[prolipoprotein] + sn-glycerol 1-phosphate + H(+). The protein operates within protein modification; lipoprotein biosynthesis (diacylglyceryl transfer). Catalyzes the transfer of the diacylglyceryl group from phosphatidylglycerol to the sulfhydryl group of the N-terminal cysteine of a prolipoprotein, the first step in the formation of mature lipoproteins. The polypeptide is Phosphatidylglycerol--prolipoprotein diacylglyceryl transferase (Acinetobacter baumannii (strain ACICU)).